Reading from the N-terminus, the 206-residue chain is Large ribosomal subunit protein uL4 (206 aa).

The interval 49–79 is disordered; that stretch reads KVKTRSEISRTTKKMYKQKGTGNARHGAASA.

The protein belongs to the universal ribosomal protein uL4 family. As to quaternary structure, part of the 50S ribosomal subunit.

One of the primary rRNA binding proteins, this protein initially binds near the 5'-end of the 23S rRNA. It is important during the early stages of 50S assembly. It makes multiple contacts with different domains of the 23S rRNA in the assembled 50S subunit and ribosome. Its function is as follows. Forms part of the polypeptide exit tunnel. This chain is Large ribosomal subunit protein uL4, found in Methylobacterium sp. (strain 4-46).